Reading from the N-terminus, the 339-residue chain is Anthranilate phosphoribosyltransferase (339 aa).

5-phospho-alpha-D-ribose 1-diphosphate-binding positions include G79, 82–83 (GD), S87, 89–92 (NIST), 107–115 (KHGNRSISS), and S119. Residue G79 participates in anthranilate binding. S91 is a Mg(2+) binding site. An anthranilate-binding site is contributed by N110. R165 contacts anthranilate. D224 and E225 together coordinate Mg(2+).

It belongs to the anthranilate phosphoribosyltransferase family. Homodimer. The cofactor is Mg(2+).

The enzyme catalyses N-(5-phospho-beta-D-ribosyl)anthranilate + diphosphate = 5-phospho-alpha-D-ribose 1-diphosphate + anthranilate. It functions in the pathway amino-acid biosynthesis; L-tryptophan biosynthesis; L-tryptophan from chorismate: step 2/5. Functionally, catalyzes the transfer of the phosphoribosyl group of 5-phosphorylribose-1-pyrophosphate (PRPP) to anthranilate to yield N-(5'-phosphoribosyl)-anthranilate (PRA). The chain is Anthranilate phosphoribosyltransferase from Listeria welshimeri serovar 6b (strain ATCC 35897 / DSM 20650 / CCUG 15529 / CIP 8149 / NCTC 11857 / SLCC 5334 / V8).